A 97-amino-acid chain; its full sequence is MTDLRHYDVIVSPVITEKSTMVSEHNQVVFNVARKATKPEIKAAVEALFGVKVTAVNTAVRKGKVKRFRGLVGRQSDVKKAIVTLAEGQSIDVSTGL.

The protein belongs to the universal ribosomal protein uL23 family. As to quaternary structure, part of the 50S ribosomal subunit. Contacts protein L29, and trigger factor when it is bound to the ribosome.

In terms of biological role, one of the early assembly proteins it binds 23S rRNA. One of the proteins that surrounds the polypeptide exit tunnel on the outside of the ribosome. Forms the main docking site for trigger factor binding to the ribosome. This Brucella canis (strain ATCC 23365 / NCTC 10854 / RM-666) protein is Large ribosomal subunit protein uL23.